Here is a 323-residue protein sequence, read N- to C-terminus: Beta-ketoacyl-[acyl-carrier-protein] synthase III (323 aa).

Residues C112 and H250 contribute to the active site. The tract at residues 251-255 (QANYR) is ACP-binding. N280 is a catalytic residue.

It belongs to the thiolase-like superfamily. FabH family. In terms of assembly, homodimer.

The protein resides in the cytoplasm. It catalyses the reaction malonyl-[ACP] + acetyl-CoA + H(+) = 3-oxobutanoyl-[ACP] + CO2 + CoA. It functions in the pathway lipid metabolism; fatty acid biosynthesis. Catalyzes the condensation reaction of fatty acid synthesis by the addition to an acyl acceptor of two carbons from malonyl-ACP. Catalyzes the first condensation reaction which initiates fatty acid synthesis and may therefore play a role in governing the total rate of fatty acid production. Possesses both acetoacetyl-ACP synthase and acetyl transacylase activities. Its substrate specificity determines the biosynthesis of branched-chain and/or straight-chain of fatty acids. The polypeptide is Beta-ketoacyl-[acyl-carrier-protein] synthase III (Clostridium beijerinckii (strain ATCC 51743 / NCIMB 8052) (Clostridium acetobutylicum)).